A 277-amino-acid polypeptide reads, in one-letter code: Phosphate import ATP-binding protein PstB 2 (277 aa).

Residues 31 to 272 (IEVPGLSLFY…PAKKQTEDYI (242 aa)) enclose the ABC transporter domain. 63 to 70 (GPSGCGKS) is an ATP binding site.

This sequence belongs to the ABC transporter superfamily. Phosphate importer (TC 3.A.1.7) family. The complex is composed of two ATP-binding proteins (PstB), two transmembrane proteins (PstC and PstA) and a solute-binding protein (PstS).

Its subcellular location is the cell inner membrane. The enzyme catalyses phosphate(out) + ATP + H2O = ADP + 2 phosphate(in) + H(+). Its function is as follows. Part of the ABC transporter complex PstSACB involved in phosphate import. Responsible for energy coupling to the transport system. The polypeptide is Phosphate import ATP-binding protein PstB 2 (Pseudomonas putida (strain ATCC 47054 / DSM 6125 / CFBP 8728 / NCIMB 11950 / KT2440)).